The sequence spans 205 residues: Guanylyl cyclase-activating protein 1 (205 aa).

G2 carries N-myristoyl glycine lipidation. The residue at position 3 (N3) is a Deamidated asparagine. 4 EF-hand domains span residues 30–48 (SGQL…KNLS), 50–85 (ASNQ…VLKG), 86–121 (KVEQ…IRAI), and 129–164 (TAEE…DELL). Positions 63, 65, 67, 69, 74, 99, 101, 103, 105, 110, 142, 144, 146, 148, and 153 each coordinate Ca(2+).

In terms of tissue distribution, retina.

Functionally, regulatory protein that inhibits guanylyl cyclase when free calcium ions concentration is elevated. This Ca(2+)-sensitive regulation of retinal guanylyl cyclase is a key event in recovery of the dark state of rod photoreceptors following light exposure. This is Guanylyl cyclase-activating protein 1 (GUCA1A) from Lithobates pipiens (Northern leopard frog).